The sequence spans 360 residues: Phenylalanine--tRNA ligase alpha subunit (360 aa).

Mg(2+) is bound at residue glutamate 260.

This sequence belongs to the class-II aminoacyl-tRNA synthetase family. Phe-tRNA synthetase alpha subunit type 1 subfamily. Tetramer of two alpha and two beta subunits. Mg(2+) serves as cofactor.

Its subcellular location is the cytoplasm. It carries out the reaction tRNA(Phe) + L-phenylalanine + ATP = L-phenylalanyl-tRNA(Phe) + AMP + diphosphate + H(+). The polypeptide is Phenylalanine--tRNA ligase alpha subunit (Rhizobium etli (strain ATCC 51251 / DSM 11541 / JCM 21823 / NBRC 15573 / CFN 42)).